We begin with the raw amino-acid sequence, 468 residues long: 3-isopropylmalate dehydratase large subunit (468 aa).

[4Fe-4S] cluster is bound by residues Cys347, Cys407, and Cys410.

The protein belongs to the aconitase/IPM isomerase family. LeuC type 1 subfamily. In terms of assembly, heterodimer of LeuC and LeuD. The cofactor is [4Fe-4S] cluster.

It carries out the reaction (2R,3S)-3-isopropylmalate = (2S)-2-isopropylmalate. It functions in the pathway amino-acid biosynthesis; L-leucine biosynthesis; L-leucine from 3-methyl-2-oxobutanoate: step 2/4. Its function is as follows. Catalyzes the isomerization between 2-isopropylmalate and 3-isopropylmalate, via the formation of 2-isopropylmaleate. This Campylobacter jejuni subsp. jejuni serotype O:6 (strain 81116 / NCTC 11828) protein is 3-isopropylmalate dehydratase large subunit.